The sequence spans 444 residues: Ribosomal protein uS12 methylthiotransferase RimO (444 aa).

Positions 4–118 (YKIGLISLGC…IQNYIDDFFN (115 aa)) constitute an MTTase N-terminal domain. [4Fe-4S] cluster-binding residues include Cys-13, Cys-48, Cys-81, Cys-155, Cys-159, and Cys-162. In terms of domain architecture, Radical SAM core spans 141-371 (TTAKHMAYIR…MSIQQNVSSK (231 aa)). The 67-residue stretch at 374 to 440 (KNKLEKVYKV…EYDLIGVVCD (67 aa)) folds into the TRAM domain.

It belongs to the methylthiotransferase family. RimO subfamily. [4Fe-4S] cluster is required as a cofactor.

The protein resides in the cytoplasm. The catalysed reaction is L-aspartate(89)-[ribosomal protein uS12]-hydrogen + (sulfur carrier)-SH + AH2 + 2 S-adenosyl-L-methionine = 3-methylsulfanyl-L-aspartate(89)-[ribosomal protein uS12]-hydrogen + (sulfur carrier)-H + 5'-deoxyadenosine + L-methionine + A + S-adenosyl-L-homocysteine + 2 H(+). Functionally, catalyzes the methylthiolation of an aspartic acid residue of ribosomal protein uS12. The chain is Ribosomal protein uS12 methylthiotransferase RimO from Clostridium novyi (strain NT).